The chain runs to 267 residues: Phosphatidylserine decarboxylase proenzyme (267 aa).

Residues Asp78, His132, and Ser236 each act as charge relay system; for autoendoproteolytic cleavage activity in the active site. Ser236 functions as the Schiff-base intermediate with substrate; via pyruvic acid; for decarboxylase activity in the catalytic mechanism. Ser236 bears the Pyruvic acid (Ser); by autocatalysis mark.

Belongs to the phosphatidylserine decarboxylase family. PSD-B subfamily. Prokaryotic type I sub-subfamily. As to quaternary structure, heterodimer of a large membrane-associated beta subunit and a small pyruvoyl-containing alpha subunit. Requires pyruvate as cofactor. In terms of processing, is synthesized initially as an inactive proenzyme. Formation of the active enzyme involves a self-maturation process in which the active site pyruvoyl group is generated from an internal serine residue via an autocatalytic post-translational modification. Two non-identical subunits are generated from the proenzyme in this reaction, and the pyruvate is formed at the N-terminus of the alpha chain, which is derived from the carboxyl end of the proenzyme. The autoendoproteolytic cleavage occurs by a canonical serine protease mechanism, in which the side chain hydroxyl group of the serine supplies its oxygen atom to form the C-terminus of the beta chain, while the remainder of the serine residue undergoes an oxidative deamination to produce ammonia and the pyruvoyl prosthetic group on the alpha chain. During this reaction, the Ser that is part of the protease active site of the proenzyme becomes the pyruvoyl prosthetic group, which constitutes an essential element of the active site of the mature decarboxylase.

It is found in the cell membrane. It catalyses the reaction a 1,2-diacyl-sn-glycero-3-phospho-L-serine + H(+) = a 1,2-diacyl-sn-glycero-3-phosphoethanolamine + CO2. It functions in the pathway phospholipid metabolism; phosphatidylethanolamine biosynthesis; phosphatidylethanolamine from CDP-diacylglycerol: step 2/2. In terms of biological role, catalyzes the formation of phosphatidylethanolamine (PtdEtn) from phosphatidylserine (PtdSer). This Helicobacter pylori (strain ATCC 700392 / 26695) (Campylobacter pylori) protein is Phosphatidylserine decarboxylase proenzyme.